The primary structure comprises 92 residues: Small ribosomal subunit protein uS19 (92 aa).

The protein belongs to the universal ribosomal protein uS19 family.

Protein S19 forms a complex with S13 that binds strongly to the 16S ribosomal RNA. This chain is Small ribosomal subunit protein uS19, found in Bacillus cereus (strain B4264).